An 822-amino-acid polypeptide reads, in one-letter code: Pentatricopeptide repeat-containing protein At2g18940, chloroplastic (822 aa).

The segment at 1–42 (MDGALFPHKPPYPIQSKRPPPSQSSNQSIKFSSATLHLPPPS) is disordered. The transit peptide at 1–77 (MDGALFPHKP…SAAARFPSLE (77 aa)) directs the protein to the chloroplast. Positions 8–22 (HKPPYPIQSKRPPPS) are enriched in pro residues. Over residues 23 to 37 (QSSNQSIKFSSATLH) the composition is skewed to low complexity. PPR repeat units follow at residues 209–243 (DVRA…GPSP), 244–279 (TLVT…GLKF), 280–314 (DEFT…GYEP), 315–349 (GTVT…SCPA), 350–384 (DSVT…GVMP), 385–419 (NAIT…GCVP), 420–454 (NTCT…GCSP), 455–489 (NRAT…GFEP), 490–524 (DRDT…GFNA), 525–559 (CVTT…GFKP), 560–594 (TETS…QIFP), 595–629 (SWML…GYKP), 630–664 (DMVI…GLSP), 665–699 (DLVT…QLKP), 700–734 (DLVS…GIRP), 735–769 (CIFT…DCRP), and 770–800 (NELT…IKTF).

This sequence belongs to the PPR family. P subfamily.

Its subcellular location is the plastid. The protein resides in the chloroplast. The sequence is that of Pentatricopeptide repeat-containing protein At2g18940, chloroplastic from Arabidopsis thaliana (Mouse-ear cress).